Consider the following 1705-residue polypeptide: ALK tyrosine kinase receptor (1705 aa).

Positions 1–21 (MIARILYFFLWSAAFLPELQC) are cleaved as a signal peptide. Over 22 to 1035 (ASQRTADALT…SLSHLALGLS (1014 aa)) the chain is Extracellular. 2 N-linked (GlcNAc...) asparagine glycosylation sites follow: asparagine 40 and asparagine 48. Residues 54-76 (RIKRKTLSVDFAVPSLLRYYLAL) form a heparin-binding region region. Residues asparagine 124, asparagine 259, asparagine 334, asparagine 434, asparagine 442, asparagine 458, asparagine 484, asparagine 578, asparagine 590, and asparagine 635 are each glycosylated (N-linked (GlcNAc...) asparagine). The MAM domain maps to 486–644 (SYCSFGREDC…NFTLSMECFL (159 aa)). Cysteine 694 and cysteine 707 are joined by a disulfide. Asparagine 717 is a glycosylation site (N-linked (GlcNAc...) asparagine). An intrachain disulfide couples cysteine 788 to cysteine 799. Residues asparagine 808 and asparagine 881 are each glycosylated (N-linked (GlcNAc...) asparagine). The interval 842-892 (GGGRGYSSQSETPEEVMDRDPSIPGRNGKSGTAGGGGGWNDSAPVPQGGRP) is disordered. Cysteine 903 and cysteine 921 are oxidised to a cystine. Residue asparagine 979 is glycosylated (N-linked (GlcNAc...) asparagine). 2 disulfide bridges follow: cysteine 980-cysteine 988 and cysteine 983-cysteine 997. The segment at 980 to 1016 (CSHCESGDCHETSEGMVCYCDEELTLAPDGVSCINST) is EGF-like. Asparagine 1014 carries N-linked (GlcNAc...) asparagine glycosylation. Residues 1036–1056 (VGTSALIAALLLAVSGVMIMY) form a helical membrane-spanning segment. The Cytoplasmic portion of the chain corresponds to 1057–1705 (RRKHTELQSI…KMEGHNATVL (649 aa)). Positions 1113 to 1389 (ISLTRGLGHG…IDYCLQDPDV (277 aa)) constitute a Protein kinase domain. ATP is bound by residues 1119 to 1127 (LGHGAFGEV) and lysine 1147. Aspartate 1246 (proton acceptor) is an active-site residue. Disordered regions lie at residues 1395–1499 (PVEY…GHVN), 1505–1524 (AHSSEKESRNRKPTNLWNPT), 1532–1557 (QQQKRQQVQAQRQTSGPRIPGEGQEQ), 1588–1613 (QQQQQQQQQQGLCRPLLPPPPPPAPT), and 1646–1681 (GLPMEPMQGPQLPPPHPGQQRPISLTRASGPEDSRP). The span at 1484 to 1493 (KPSSTTSNAQ) shows a compositional bias: polar residues. 2 stretches are compositionally biased toward low complexity: residues 1532-1544 (QQQKRQQVQAQRQ) and 1588-1602 (QQQQQQQQQQGLCRP). A compositionally biased stretch (pro residues) spans 1603-1613 (LLPPPPPPAPT).

It belongs to the protein kinase superfamily. Tyr protein kinase family. Insulin receptor subfamily. Homodimer; homodimerizes upon binding to alkal ligands (alkal1, alkal2a or alkal2b). As to expression, highly expressed in the developing central nervous system: highly expressed in brain, with much lower expression in heart, caudal fin and testis.

The protein localises to the cell membrane. It carries out the reaction L-tyrosyl-[protein] + ATP = O-phospho-L-tyrosyl-[protein] + ADP + H(+). Inhibited by ALK inhibitor TAE684. Receptor tyrosine kinase required for neurogenesis in the developing central nervous system. Following activation by alkal ligands (alkal1, alkal2a or alkal2b) at the cell surface, transduces an extracellular signal into an intracellular response. Ligand-binding to the extracellular domain induces tyrosine kinase activation, resulting in the activation of the mitogen-activated protein kinase (MAPK) pathway. Phosphorylates almost exclusively at the first tyrosine of the Y-x-x-x-Y-Y motif. The sequence is that of ALK tyrosine kinase receptor from Danio rerio (Zebrafish).